Here is a 98-residue protein sequence, read N- to C-terminus: Flagellar hook-basal body complex protein FliE (98 aa).

Residues 22 to 56 (KTDNATGAGNTFTQMLDSMSDTQSNAQTSVSNLLT) are disordered. Positions 23–56 (TDNATGAGNTFTQMLDSMSDTQSNAQTSVSNLLT) are enriched in polar residues.

Belongs to the FliE family.

The protein localises to the bacterial flagellum basal body. The sequence is that of Flagellar hook-basal body complex protein FliE from Listeria innocua serovar 6a (strain ATCC BAA-680 / CLIP 11262).